The chain runs to 255 residues: 5'-nucleotidase SurE (255 aa).

Residues D16, D17, S47, and N100 each contribute to the a divalent metal cation site.

Belongs to the SurE nucleotidase family. A divalent metal cation is required as a cofactor.

It localises to the cytoplasm. The enzyme catalyses a ribonucleoside 5'-phosphate + H2O = a ribonucleoside + phosphate. Functionally, nucleotidase that shows phosphatase activity on nucleoside 5'-monophosphates. This is 5'-nucleotidase SurE from Vibrio vulnificus (strain CMCP6).